Here is a 363-residue protein sequence, read N- to C-terminus: Peroxin-36 (363 aa).

Residues 1 to 193 (MSNLEKQIRL…ESFFINSFEQ (193 aa)) are Cytoplasmic-facing. Disordered stretches follow at residues 71–114 (QNHQ…DTST) and 128–157 (TNSN…SKSG). The span at 97–114 (VDSNSDSSSSETLIDTST) shows a compositional bias: low complexity. Residues 194–213 (LIALFDNFYFLSSLIGFNTS) traverse the membrane as a helical segment. The Peroxisomal portion of the chain corresponds to 214–232 (NSNSKITRLLRNFIKQASK). A helical membrane pass occupies residues 233-250 (IWLVIIFLTVKNLFIRMI). Residues 251-363 (KLNRTEKKVK…SSDDIIDEYA (113 aa)) lie on the Cytoplasmic side of the membrane.

Its subcellular location is the peroxisome membrane. Controls peroxisome morphology and abundance under conditions of peroxisome proliferation such as oleate and methanol media. Has additional function(s), which is not present in its functional homologs such as Saccharomyces cerevisea PEX34 or human PEX16. This Komagataella phaffii (strain GS115 / ATCC 20864) (Yeast) protein is Peroxin-36.